A 420-amino-acid polypeptide reads, in one-letter code: Transcriptional adapter 2-beta (420 aa).

The segment at 4 to 59 adopts a ZZ-type zinc-finger fold; that stretch reads LGKKYCVYCLAEVSPLRFRCTECQDIELCPECFSAGAEIGHHRRYHGYQLVDGGRF. The Zn(2+) site is built by Cys-9, Cys-12, Cys-23, Cys-26, Cys-32, Cys-35, His-45, and His-49. Residues 65–118 enclose the SANT domain; that stretch reads EAEGGWTSREEQLLLDAIEQFGFGNWEDMAAHVGASRTPQEVMEHYVSMYIHGN. A disordered region spans residues 305 to 335; it reads SAEYEAARHKREKRKENKNLAGSKRGKEDGK.

In terms of assembly, interacts with GCN5L2, SMARCA4, SMARCE1 and PAX5. Component of the TFTC-HAT complex.

The protein resides in the nucleus. Its function is as follows. Coactivates PAX5-dependent transcription together with either SMARCA4 or GCN5L2. The protein is Transcriptional adapter 2-beta (TADA2B) of Homo sapiens (Human).